We begin with the raw amino-acid sequence, 25 residues long: Toxin LyeTx 1 (25 aa).

Leu25 carries the leucine amide modification.

In terms of tissue distribution, expressed by the venom gland.

It is found in the secreted. Functionally, has antimicrobial activity against Gram-positive bacterium S.aureus (MIC=3.79 uM), Gram-negative bacterium E.coli (MIC=7.81 uM) and yeasts C.krusei (MIC=26.3 uM) and C.neoformans (MIC=13.2 uM). Has hemolytic activity against rabbit erythrocytes. Forms pores in lipid bilayers in vitro; pore formation is reduced when cholesterol is present in the bilayers. In Lycosa erythrognatha (Wolf spider), this protein is Toxin LyeTx 1.